The primary structure comprises 666 residues: ATP-dependent RNA helicase DDX51 (666 aa).

Residue alanine 2 is modified to N-acetylalanine. Residues 9–152 (YPGPDAAAAA…AAPDGPALEE (144 aa)) are disordered. Residues 10 to 28 (PGPDAAAAAGPEGAEAGAH) show a composition bias toward low complexity. Residues 33–48 (ALLERLQSRARERQQQ) show a composition bias toward basic and acidic residues. Residues 49–58 (REPAQTEAAA) are compositionally biased toward low complexity. The segment covering 65-75 (RRRRRPRRRRR) has biased composition (basic residues). Residues serine 83 and serine 103 each carry the phosphoserine modification. The segment covering 97-108 (EDAGAESNEEAP) has biased composition (acidic residues). A Q motif motif is present at residues 221 to 229 (YFPVQAAVI). A Helicase ATP-binding domain is found at 243–452 (GRGGYRPSDL…QLGLHQPRLF (210 aa)). Position 256–263 (256–263 (APTGSGKT)) interacts with ATP. Positions 371 to 374 (DEAD) match the DEAD box motif. Residues 494–640 (VVLHLVLEMG…RHELSSKLLQ (147 aa)) enclose the Helicase C-terminal domain.

Belongs to the DEAD box helicase family. DDX51/DBP6 subfamily.

It is found in the nucleus. The protein resides in the nucleolus. It carries out the reaction ATP + H2O = ADP + phosphate + H(+). ATP-binding RNA helicase involved in the biogenesis of 60S ribosomal subunits. The protein is ATP-dependent RNA helicase DDX51 (DDX51) of Homo sapiens (Human).